The primary structure comprises 403 residues: Alkaline protease 1 (403 aa).

An N-terminal signal peptide occupies residues 1–21; that stretch reads MLSIKRTLLLLGAVLPAVFGA. Positions 22 to 125 are excised as a propeptide; it reads PVQETRRAAQ…QIWYIDALTT (104 aa). Positions 36-120 constitute an Inhibitor I9 domain; that stretch reads KYIVTFKPGT…HVEEDQIWYI (85 aa). The Peptidase S8 domain maps to 130-403; sequence PWGLGSISHK…PNKLAYNGNA (274 aa). Catalysis depends on charge relay system residues Asp-162 and His-193. Asn-253 and Asn-307 each carry an N-linked (GlcNAc...) asparagine glycan. The active-site Charge relay system is the Ser-349.

This sequence belongs to the peptidase S8 family.

Its subcellular location is the secreted. It catalyses the reaction Hydrolysis of proteins with broad specificity, and of Bz-Arg-OEt &gt; Ac-Tyr-OEt. Does not hydrolyze peptide amides.. Its function is as follows. Secreted alkaline protease that allows assimilation of proteinaceous substrates. In Neosartorya fischeri (strain ATCC 1020 / DSM 3700 / CBS 544.65 / FGSC A1164 / JCM 1740 / NRRL 181 / WB 181) (Aspergillus fischerianus), this protein is Alkaline protease 1 (alp1).